Here is a 596-residue protein sequence, read N- to C-terminus: Phosphoenolpyruvate carboxykinase [GTP] (596 aa).

Residues R77 and 205–207 (YGG) contribute to the substrate site. The Mn(2+) site is built by K214 and H234. S256 serves as a coordination point for substrate. A GTP-binding site is contributed by 257–262 (ACGKTN). C258 is a catalytic residue. A Mn(2+)-binding site is contributed by D283. The interval 362 to 388 (KKGSTEKAAHPNSRFTAPAKNNPAISP) is disordered. Residue 373-375 (NSR) coordinates substrate. Residues R375, R406, and 499 to 502 (YGDN) contribute to the GTP site.

The protein belongs to the phosphoenolpyruvate carboxykinase [GTP] family. Monomer. Requires Mn(2+) as cofactor.

The protein localises to the cytoplasm. It catalyses the reaction oxaloacetate + GTP = phosphoenolpyruvate + GDP + CO2. The protein operates within carbohydrate biosynthesis; gluconeogenesis. Its function is as follows. Catalyzes the conversion of oxaloacetate (OAA) to phosphoenolpyruvate (PEP), the rate-limiting step in the metabolic pathway that produces glucose from lactate and other precursors derived from the citric acid cycle. This is Phosphoenolpyruvate carboxykinase [GTP] from Anaeromyxobacter sp. (strain K).